A 293-amino-acid polypeptide reads, in one-letter code: Ribosomal protein L11 methyltransferase (293 aa).

4 residues coordinate S-adenosyl-L-methionine: T145, G166, D188, and N230.

Belongs to the methyltransferase superfamily. PrmA family.

Its subcellular location is the cytoplasm. It carries out the reaction L-lysyl-[protein] + 3 S-adenosyl-L-methionine = N(6),N(6),N(6)-trimethyl-L-lysyl-[protein] + 3 S-adenosyl-L-homocysteine + 3 H(+). Its function is as follows. Methylates ribosomal protein L11. This Haemophilus ducreyi (strain 35000HP / ATCC 700724) protein is Ribosomal protein L11 methyltransferase.